The following is a 511-amino-acid chain: Glucans biosynthesis protein G (511 aa).

An N-terminal signal peptide occupies residues 1 to 22 (MMKMRWLSAAVMLTLYTSSSWA).

It belongs to the OpgD/OpgG family.

It is found in the periplasm. The protein operates within glycan metabolism; osmoregulated periplasmic glucan (OPG) biosynthesis. Involved in the biosynthesis of osmoregulated periplasmic glucans (OPGs). This chain is Glucans biosynthesis protein G (mdoG), found in Shigella flexneri.